The primary structure comprises 547 residues: Chaperonin GroEL 1 (547 aa).

Residues 30 to 33, Lys-51, 87 to 91, Gly-415, 479 to 481, and Asp-495 each bind ATP; these read TLGP, DGTTT, and NAA.

This sequence belongs to the chaperonin (HSP60) family. In terms of assembly, forms a cylinder of 14 subunits composed of two heptameric rings stacked back-to-back. Interacts with the co-chaperonin GroES.

It localises to the cytoplasm. The enzyme catalyses ATP + H2O + a folded polypeptide = ADP + phosphate + an unfolded polypeptide.. Functionally, together with its co-chaperonin GroES, plays an essential role in assisting protein folding. The GroEL-GroES system forms a nano-cage that allows encapsulation of the non-native substrate proteins and provides a physical environment optimized to promote and accelerate protein folding. The protein is Chaperonin GroEL 1 of Vibrio parahaemolyticus serotype O3:K6 (strain RIMD 2210633).